An 891-amino-acid polypeptide reads, in one-letter code: Alanine--tRNA ligase (891 aa).

His564, His568, Cys677, and His681 together coordinate Zn(2+).

It belongs to the class-II aminoacyl-tRNA synthetase family. It depends on Zn(2+) as a cofactor.

The protein resides in the cytoplasm. The catalysed reaction is tRNA(Ala) + L-alanine + ATP = L-alanyl-tRNA(Ala) + AMP + diphosphate. Its function is as follows. Catalyzes the attachment of alanine to tRNA(Ala) in a two-step reaction: alanine is first activated by ATP to form Ala-AMP and then transferred to the acceptor end of tRNA(Ala). Also edits incorrectly charged Ser-tRNA(Ala) and Gly-tRNA(Ala) via its editing domain. The protein is Alanine--tRNA ligase of Rhodopseudomonas palustris (strain HaA2).